Reading from the N-terminus, the 322-residue chain is RNA-binding protein KhpB (322 aa).

The jag_N domain stretch occupies residues valine 3–threonine 52. A compositionally biased stretch (low complexity) spans alanine 58–alanine 82. Residues alanine 58 to threonine 162 are disordered. Threonine 89 is subject to Phosphothreonine. Over residues threonine 89–arginine 99 the composition is skewed to polar residues. The segment covering glutamine 100–valine 129 has biased composition (low complexity). Residues serine 141 to arginine 161 show a composition bias toward polar residues. Residues glutamate 174–valine 251 enclose the KH domain. One can recognise an R3H domain in the interval glutamate 256 to lysine 322.

In terms of assembly, forms a complex with KhpA.

Its subcellular location is the cytoplasm. In terms of biological role, a probable RNA chaperone. Forms a complex with KhpA which binds to cellular RNA and controls its expression. Plays a role in peptidoglycan (PG) homeostasis and cell length regulation. Functionally, necessary for correct cell elongation. This is RNA-binding protein KhpB from Lactiplantibacillus plantarum (strain ATCC BAA-793 / NCIMB 8826 / WCFS1) (Lactobacillus plantarum).